A 373-amino-acid chain; its full sequence is uncharacterized protein (373 aa).

The protein belongs to the glycosyltransferase 28 family.

This is an uncharacterized protein from Bacillus subtilis (strain 168).